The sequence spans 464 residues: Putative F-box/LRR-repeat protein At3g59160 (464 aa).

The region spanning 12 to 60 (KDMINDLPDALLCHVLSYLTTKEAASTSLLSRRWRYLLAFVPNLEFDDS) is the F-box domain. LRR repeat units follow at residues 172–198 (TLKIRDGPPIDVKHVHLPKLKTLHLES), 200–225 (MFDEEDIGFSKLLSGCPELEELVLHH), 233–258 (SCSVSVATLKRLTFCCNNMKFCGMHE), 336–367 (VLCLSADTLEVLTYCCKQIPIFNNLTHVTIQS), 368–393 (TPKVGWKSLLKLLKNSPKLQTLVFQG), and 408–433 (KIEKQIEKVKHFLETMPHLEQLVLHY).

This Arabidopsis thaliana (Mouse-ear cress) protein is Putative F-box/LRR-repeat protein At3g59160.